The primary structure comprises 4306 residues: Cytoplasmic dynein 2 heavy chain 1 (4306 aa).

The tract at residues 1–1650 is stem; it reads MAGSLSDVRK…YVQMVDSELQ (1650 aa). 145 to 152 provides a ligand contact to ATP; the sequence is LGVVLRKS. Positions 669–696 form a coiled coil; the sequence is KELEGYIQKLQNAAERLATENRRLRKWH. 4 AAA regions span residues 1651–1875, 1941–2161, 2249–2505, and 2617–2862; these read YTYE…VLRG, SALK…KQND, LTAD…WVLG, and HYGR…ESCK. Residues 1689–1696, 1979–1986, 2291–2298, and 2655–2662 contribute to the ATP site; these read GPAGTGKT, GPSGAGKS, GPEGCGKG, and GRSGVGRR. Residues 2880-3168 are stalk; sequence AISSSKRKEL…AEVSKAQETI (289 aa). Coiled coils occupy residues 2896–2981, 3108–3199, and 3407–3441; these read LQAG…KEVQ, LETE…LATL, and IQHEKPDLEEQKTKLLQQEEDKKIQLARLEESLLE. 2 AAA regions span residues 3243–3472 and 3689–3904; these read LCTE…LIQD and MALF…VIDR.

The protein belongs to the dynein heavy chain family. As to quaternary structure, the cytoplasmic dynein complex 2 is probably composed by a heavy chain DYNC2H1 homodimer and a number of DYNC2LI1 light intermediate chains. As to expression, widely expressed both in ciliated and unciliated tissues. Detected in brain and testis (at protein level).

Its subcellular location is the cytoplasm. It is found in the cytoskeleton. It localises to the cilium axoneme. The protein localises to the cell membrane. May function as a motor for intraflagellar retrograde transport. Functions in cilia biogenesis. May play a role in transport between endoplasmic reticulum and Golgi or organization of the Golgi in cells. The chain is Cytoplasmic dynein 2 heavy chain 1 (Dync2h1) from Rattus norvegicus (Rat).